Consider the following 194-residue polypeptide: MIPVDALLKAYREGFFPMADASDGQLYWCRPEMRALFPLESYRPSRDVLRLQRRGEYSVFFDSDFEAVIRACAAPRKDDPETWISGEIVETYIRIHELGLAHSVECRYRGELAGGLYGIAIGGAFFGESMFYRRSYASQVALWHLVCHLRLKGYLMLDAQIMNPHLRRLGAVEVPHDEYMRLLEAALRKKTAFL.

Belongs to the L/F-transferase family.

It localises to the cytoplasm. The enzyme catalyses N-terminal L-lysyl-[protein] + L-leucyl-tRNA(Leu) = N-terminal L-leucyl-L-lysyl-[protein] + tRNA(Leu) + H(+). It carries out the reaction N-terminal L-arginyl-[protein] + L-leucyl-tRNA(Leu) = N-terminal L-leucyl-L-arginyl-[protein] + tRNA(Leu) + H(+). The catalysed reaction is L-phenylalanyl-tRNA(Phe) + an N-terminal L-alpha-aminoacyl-[protein] = an N-terminal L-phenylalanyl-L-alpha-aminoacyl-[protein] + tRNA(Phe). Functions in the N-end rule pathway of protein degradation where it conjugates Leu, Phe and, less efficiently, Met from aminoacyl-tRNAs to the N-termini of proteins containing an N-terminal arginine or lysine. The chain is Leucyl/phenylalanyl-tRNA--protein transferase from Chlorobium luteolum (strain DSM 273 / BCRC 81028 / 2530) (Pelodictyon luteolum).